The following is a 301-amino-acid chain: Probable alpha-L-glutamate ligase (301 aa).

Residues 104-287 (LQLLARKGVG…VAGMIINWTE (184 aa)) form the ATP-grasp domain. ATP contacts are provided by residues Lys-141, 178 to 179 (EF), Asp-187, and 211 to 213 (RSN). Residues Asp-248, Glu-260, and Asn-262 each coordinate Mg(2+). Residues Asp-248, Glu-260, and Asn-262 each coordinate Mn(2+).

Belongs to the RimK family. The cofactor is Mg(2+). It depends on Mn(2+) as a cofactor.

The chain is Probable alpha-L-glutamate ligase from Marinobacter nauticus (strain ATCC 700491 / DSM 11845 / VT8) (Marinobacter aquaeolei).